The chain runs to 715 residues: Polyribonucleotide nucleotidyltransferase (715 aa).

The Mg(2+) site is built by Asp498 and Asp504. Positions 565 to 625 (PKVCMMQIKP…ETVKKTVAFI (61 aa)) constitute a KH domain. Residues 635-706 (GTCYQASILR…DRGRIDFLLL (72 aa)) enclose the S1 motif domain.

It belongs to the polyribonucleotide nucleotidyltransferase family. The cofactor is Mg(2+).

The protein resides in the cytoplasm. The enzyme catalyses RNA(n+1) + phosphate = RNA(n) + a ribonucleoside 5'-diphosphate. Involved in mRNA degradation. Catalyzes the phosphorolysis of single-stranded polyribonucleotides processively in the 3'- to 5'-direction. The chain is Polyribonucleotide nucleotidyltransferase from Onion yellows phytoplasma (strain OY-M).